A 291-amino-acid chain; its full sequence is Cytochrome c-552 (291 aa).

An N-terminal signal peptide occupies residues 1–23 (MKKTLMASAVGAVIAFGTHGAMA). Cys68, Cys71, His72, Cys157, Cys161, and His162 together coordinate heme c.

In terms of processing, binds 2 heme c groups per subunit.

Its subcellular location is the periplasm. Functionally, may play a role in nitrite reduction. Shows peroxidase activity on proteolytic modification. The protein is Cytochrome c-552 (nirB) of Stutzerimonas stutzeri (Pseudomonas stutzeri).